Reading from the N-terminus, the 185-residue chain is Elongation factor P (185 aa).

Belongs to the elongation factor P family.

The protein resides in the cytoplasm. The protein operates within protein biosynthesis; polypeptide chain elongation. In terms of biological role, involved in peptide bond synthesis. Stimulates efficient translation and peptide-bond synthesis on native or reconstituted 70S ribosomes in vitro. Probably functions indirectly by altering the affinity of the ribosome for aminoacyl-tRNA, thus increasing their reactivity as acceptors for peptidyl transferase. This chain is Elongation factor P, found in Dechloromonas aromatica (strain RCB).